The chain runs to 284 residues: 4-diphosphocytidyl-2-C-methyl-D-erythritol kinase (284 aa).

Lysine 14 is an active-site residue. 98–108 provides a ligand contact to ATP; sequence PMGGGIGGGSS. Aspartate 140 is an active-site residue.

This sequence belongs to the GHMP kinase family. IspE subfamily.

It catalyses the reaction 4-CDP-2-C-methyl-D-erythritol + ATP = 4-CDP-2-C-methyl-D-erythritol 2-phosphate + ADP + H(+). It functions in the pathway isoprenoid biosynthesis; isopentenyl diphosphate biosynthesis via DXP pathway; isopentenyl diphosphate from 1-deoxy-D-xylulose 5-phosphate: step 3/6. In terms of biological role, catalyzes the phosphorylation of the position 2 hydroxy group of 4-diphosphocytidyl-2C-methyl-D-erythritol. In Shewanella loihica (strain ATCC BAA-1088 / PV-4), this protein is 4-diphosphocytidyl-2-C-methyl-D-erythritol kinase.